We begin with the raw amino-acid sequence, 163 residues long: Protein YtsP (163 aa).

Belongs to the free Met sulfoxide reductase family.

In Bacillus subtilis (strain 168), this protein is Protein YtsP (ytsP).